The following is a 471-amino-acid chain: RuvB-like protein 2 (471 aa).

Residue 75 to 82 (GPPSTGKT) participates in ATP binding.

Belongs to the RuvB family. Probably forms a homohexamer. Interacts with RVB1 and may form heterododecamers with RVB1. Component of the SWR1 chromatin remodeling complex composed of at least ACT1, ARP4, RVB1, RVB2, ARP6, YAF9, VPS71, VPS72, SWC3, SWC4, SWC5, SWC7 and SWR1, and perhaps BDF1. Component of the chromatin-remodeling INO80 complex, at least composed of ARP4, ARP5, ARP8, RVB1, RVB2, TAF14, NHP10, IES1, IES3, IES4, IES6, ACT1, IES2, IES5 and INO80. Also belongs to the R2TP complex composed of at least RVB1, RVB2, TAH1 and PIH1. Interacts with SPT15/TBP.

Its subcellular location is the nucleus. It localises to the nucleoplasm. The enzyme catalyses ATP + H2O = ADP + phosphate + H(+). In terms of biological role, DNA helicase which participates in several chromatin remodeling complexes, including the SWR1 and the INO80 complexes. The SWR1 complex mediates the ATP-dependent exchange of histone H2A for the H2A variant HZT1 leading to transcriptional regulation of selected genes by chromatin remodeling. The INO80 complex remodels chromatin by shifting nucleosomes. Its ability to induce transcription of some phosphate-responsive genes is modulated by inositol polyphosphates. The INO80 complex is involved in DNA repair by associating to 'Ser-129' phosphorylated H2A histones as a response to DNA damage. During transcription may recruit SPT15/TBP to the TATA-boxes of involved genes. Required for box C/D and box H/ACA snoRNA accumulation and involved in pre-rRNA processing. This Saccharomyces cerevisiae (strain ATCC 204508 / S288c) (Baker's yeast) protein is RuvB-like protein 2 (RVB2).